A 328-amino-acid polypeptide reads, in one-letter code: Ribosomal RNA small subunit methyltransferase H (328 aa).

S-adenosyl-L-methionine contacts are provided by residues 64–66, D83, F112, D129, and Q136; that span reads GGH.

Belongs to the methyltransferase superfamily. RsmH family.

Its subcellular location is the cytoplasm. The enzyme catalyses cytidine(1402) in 16S rRNA + S-adenosyl-L-methionine = N(4)-methylcytidine(1402) in 16S rRNA + S-adenosyl-L-homocysteine + H(+). Its function is as follows. Specifically methylates the N4 position of cytidine in position 1402 (C1402) of 16S rRNA. This Bdellovibrio bacteriovorus (strain ATCC 15356 / DSM 50701 / NCIMB 9529 / HD100) protein is Ribosomal RNA small subunit methyltransferase H.